Consider the following 118-residue polypeptide: uncharacterized protein (118 aa).

The signal sequence occupies residues 1-22; it reads MKMSYLRSGIVGFLAGASLSYA. Residues 41-71 adopt a coiled-coil conformation; that stretch reads TATEALETDKQLYKKIEKKIEELESSCVKKS.

This is an uncharacterized protein from Schizosaccharomyces pombe (strain 972 / ATCC 24843) (Fission yeast).